The primary structure comprises 73 residues: Putative defensin-like protein 42 (73 aa).

4 cysteine pairs are disulfide-bonded: Cys-6–Cys-58, Cys-18–Cys-41, Cys-27–Cys-50, and Cys-31–Cys-52.

Belongs to the DEFL family.

The sequence is that of Putative defensin-like protein 42 from Arabidopsis thaliana (Mouse-ear cress).